The following is a 449-amino-acid chain: Phosphomethylpyrimidine synthase (449 aa).

Substrate-binding positions include Asn-80, Met-109, Tyr-138, His-173, 193–195 (SRG), 234–237 (DSLR), and Glu-273. His-277 is a Zn(2+) binding site. Tyr-300 is a substrate binding site. His-341 is a Zn(2+) binding site. Residues Cys-421, Cys-424, and Cys-429 each coordinate [4Fe-4S] cluster.

It belongs to the ThiC family. Homodimer. Requires [4Fe-4S] cluster as cofactor.

It catalyses the reaction 5-amino-1-(5-phospho-beta-D-ribosyl)imidazole + S-adenosyl-L-methionine = 4-amino-2-methyl-5-(phosphooxymethyl)pyrimidine + CO + 5'-deoxyadenosine + formate + L-methionine + 3 H(+). Its pathway is cofactor biosynthesis; thiamine diphosphate biosynthesis. Functionally, catalyzes the synthesis of the hydroxymethylpyrimidine phosphate (HMP-P) moiety of thiamine from aminoimidazole ribotide (AIR) in a radical S-adenosyl-L-methionine (SAM)-dependent reaction. The protein is Phosphomethylpyrimidine synthase of Campylobacter hominis (strain ATCC BAA-381 / DSM 21671 / CCUG 45161 / LMG 19568 / NCTC 13146 / CH001A).